A 56-amino-acid polypeptide reads, in one-letter code: Ferredoxin (56 aa).

4Fe-4S ferredoxin-type domains are found at residues 2 to 28 (AYKI…SQGD) and 29 to 56 (SIFV…PVQE). Positions 9, 12, 15, 19, 38, 41, 44, and 48 each coordinate [4Fe-4S] cluster.

Requires [4Fe-4S] cluster as cofactor.

In terms of biological role, ferredoxins are iron-sulfur proteins that transfer electrons in a wide variety of metabolic reactions. This Clostridium pasteurianum protein is Ferredoxin.